Consider the following 452-residue polypeptide: GTPase Obg (452 aa).

The 158-residue stretch at 1–158 (MFIDRAKIYV…KWIVLELKVM (158 aa)) folds into the Obg domain. Disordered regions lie at residues 66 to 87 (GKRG…DKVI) and 117 to 143 (AEGG…SEDG). The 180-residue stretch at 159–338 (AEVGLIGYPN…LLDFVAEKVA (180 aa)) folds into the OBG-type G domain. GTP contacts are provided by residues 165–172 (GYPNVGKS), 190–194 (FTTLN), 212–215 (DIPG), 282–285 (NKMD), and 319–321 (SAA). Mg(2+)-binding residues include Ser172 and Thr192. An OCT domain is found at 376 to 452 (IEEKPKSDFG…KIGNVEFEYQ (77 aa)).

Belongs to the TRAFAC class OBG-HflX-like GTPase superfamily. OBG GTPase family. In terms of assembly, monomer. Mg(2+) is required as a cofactor.

The protein resides in the cytoplasm. In terms of biological role, an essential GTPase which binds GTP, GDP and possibly (p)ppGpp with moderate affinity, with high nucleotide exchange rates and a fairly low GTP hydrolysis rate. Plays a role in control of the cell cycle, stress response, ribosome biogenesis and in those bacteria that undergo differentiation, in morphogenesis control. The protein is GTPase Obg of Natranaerobius thermophilus (strain ATCC BAA-1301 / DSM 18059 / JW/NM-WN-LF).